A 379-amino-acid polypeptide reads, in one-letter code: Putative cysteine desulfurase IscS 1 (379 aa).

Residues 71–72 (GT), Asn151, Gln179, and 199–201 (SGH) each bind pyridoxal 5'-phosphate. N6-(pyridoxal phosphate)lysine is present on Lys202. Residue Thr237 participates in pyridoxal 5'-phosphate binding. The active-site Cysteine persulfide intermediate is the Cys325. [2Fe-2S] cluster is bound at residue Cys325.

It belongs to the class-V pyridoxal-phosphate-dependent aminotransferase family. NifS/IscS subfamily. Requires pyridoxal 5'-phosphate as cofactor.

The catalysed reaction is (sulfur carrier)-H + L-cysteine = (sulfur carrier)-SH + L-alanine. In terms of biological role, catalyzes the removal of elemental sulfur from cysteine to produce alanine. The chain is Putative cysteine desulfurase IscS 1 (iscS1) from Bacillus subtilis (strain 168).